The following is a 185-amino-acid chain: GTP-binding protein rhb1 (185 aa).

11 residues coordinate GTP: serine 16, glycine 18, lysine 19, serine 20, serine 21, valine 32, tyrosine 35, threonine 38, asparagine 119, aspartate 122, and alanine 150. Serine 20 lines the Mg(2+) pocket. The short motif at 35 to 43 (YYPTIENTF) is the Effector region element. Threonine 38 is a Mg(2+) binding site. Cysteine 182 is subject to Cysteine methyl ester. Cysteine 182 carries the S-farnesyl cysteine lipid modification. The propeptide at 183–185 (VIA) is removed in mature form.

This sequence belongs to the small GTPase superfamily. Rheb family.

The protein resides in the cell membrane. It catalyses the reaction GTP + H2O = GDP + phosphate + H(+). Its function is as follows. Binds GTP and exhibits intrinsic GTPase activity. Regulates entry into stationary phase when extracellular nitrogen levels are adequate for growth. In Schizosaccharomyces pombe (strain 972 / ATCC 24843) (Fission yeast), this protein is GTP-binding protein rhb1 (rhb1).